Consider the following 281-residue polypeptide: 2-dehydro-3-deoxyphosphooctonate aldolase (281 aa).

The protein belongs to the KdsA family.

The protein localises to the cytoplasm. The enzyme catalyses D-arabinose 5-phosphate + phosphoenolpyruvate + H2O = 3-deoxy-alpha-D-manno-2-octulosonate-8-phosphate + phosphate. Its pathway is carbohydrate biosynthesis; 3-deoxy-D-manno-octulosonate biosynthesis; 3-deoxy-D-manno-octulosonate from D-ribulose 5-phosphate: step 2/3. It functions in the pathway bacterial outer membrane biogenesis; lipopolysaccharide biosynthesis. The protein is 2-dehydro-3-deoxyphosphooctonate aldolase of Pseudomonas putida (strain GB-1).